The following is a 366-amino-acid chain: tRNA/tmRNA (uracil-C(5))-methyltransferase (366 aa).

The S-adenosyl-L-methionine site is built by glutamine 189, tyrosine 217, asparagine 222, glutamate 238, and aspartate 298. Residue cysteine 323 is the Nucleophile of the active site. Glutamate 357 acts as the Proton acceptor in catalysis.

This sequence belongs to the class I-like SAM-binding methyltransferase superfamily. RNA M5U methyltransferase family. TrmA subfamily.

The catalysed reaction is uridine(54) in tRNA + S-adenosyl-L-methionine = 5-methyluridine(54) in tRNA + S-adenosyl-L-homocysteine + H(+). It catalyses the reaction uridine(341) in tmRNA + S-adenosyl-L-methionine = 5-methyluridine(341) in tmRNA + S-adenosyl-L-homocysteine + H(+). Its function is as follows. Dual-specificity methyltransferase that catalyzes the formation of 5-methyluridine at position 54 (m5U54) in all tRNAs, and that of position 341 (m5U341) in tmRNA (transfer-mRNA). The sequence is that of tRNA/tmRNA (uracil-C(5))-methyltransferase from Idiomarina loihiensis (strain ATCC BAA-735 / DSM 15497 / L2-TR).